We begin with the raw amino-acid sequence, 375 residues long: Trichodiene synthase (375 aa).

Belongs to the trichodiene synthase family.

The catalysed reaction is (2E,6E)-farnesyl diphosphate = trichodiene + diphosphate. Its pathway is sesquiterpene biosynthesis; trichothecene biosynthesis. In terms of biological role, TS is a member of the terpene cyclase group of enzymes. It catalyzes the isomerization and cyclization of farnesyl pyro-phosphate to form trichodiene, the first cyclic intermediate in the biosynthetic pathway for trichothecenes. It serves to branch trichothecene biosynthesis from the isoprenoid pathway. The chain is Trichodiene synthase (TRI5) from Fusarium austroamericanum.